Consider the following 220-residue polypeptide: MAYRDQPLGELALSIPRASALFRKYDMDYCCGGKQTLSRAAARKELDVEVIEAELAKLAEQPIEKDWRSAPLAEIIDHIIVRYHDRHREQLPELILQATKVERVHADKPSVPKGLTKYLTMLHEELSSHMMKEEQILFPMIKQGMGSQAMGPISVMESEHDEAGELLEVIKHTTNNVTPPPEACTTWKAMYNGINELIDDLMDHISLENNVLFPRALAGE.

Belongs to the RIC family. YtfE subfamily. In terms of assembly, homodimer.

Its subcellular location is the cytoplasm. Functionally, di-iron-containing protein involved in the repair of iron-sulfur clusters damaged by oxidative and nitrosative stress conditions. This chain is Iron-sulfur cluster repair protein YtfE, found in Escherichia coli O8 (strain IAI1).